The chain runs to 208 residues: 7-carboxy-7-deazaguanine synthase (208 aa).

Substrate is bound by residues 23 to 25 and Arg38; that span reads LQG. Residues 29-208 enclose the Radical SAM core domain; it reads WAGGNAFFIR…LQTHKYLGVR (180 aa). Positions 42, 46, and 49 each coordinate [4Fe-4S] cluster. Thr83 serves as a coordination point for substrate. Residues Gly85 and 126 to 128 contribute to the S-adenosyl-L-methionine site; that span reads SPK.

This sequence belongs to the radical SAM superfamily. 7-carboxy-7-deazaguanine synthase family. In terms of assembly, homodimer. The cofactor is [4Fe-4S] cluster. Requires S-adenosyl-L-methionine as cofactor. It depends on Mg(2+) as a cofactor.

It catalyses the reaction 6-carboxy-5,6,7,8-tetrahydropterin + H(+) = 7-carboxy-7-deazaguanine + NH4(+). It functions in the pathway purine metabolism; 7-cyano-7-deazaguanine biosynthesis. Functionally, catalyzes the complex heterocyclic radical-mediated conversion of 6-carboxy-5,6,7,8-tetrahydropterin (CPH4) to 7-carboxy-7-deazaguanine (CDG), a step common to the biosynthetic pathways of all 7-deazapurine-containing compounds. The protein is 7-carboxy-7-deazaguanine synthase of Synechocystis sp. (strain ATCC 27184 / PCC 6803 / Kazusa).